The chain runs to 288 residues: MAEKKQWHETLHDQFGQYFAVDNVLYHEKTDHQDLIIFENAAFGRVMALDGVVQTTERDEFIYHEMMTHVPLLAHGHAKHVLIIGGGDGAMLREVTRHKNVESITMVEIDAGVVSFCRQYLPNHNAGSYDDPRFKLVIDDGVNFVNQTSQTFDVIISDCTDPIGPGESLFTSAFYEGCKRCLNPGGIFVAQNGVCFLQQEEAIDSHRKLSHYFSDVGFYQAAIPTYYGGIMTFAWATDNDALRHLSTEIIQARFLASGLKCRYYNPAVHTAAFALPQYLQDALASQPS.

Residues 9–238 (ETLHDQFGQY…GIMTFAWATD (230 aa)) form the PABS domain. Position 33 (Q33) interacts with S-methyl-5'-thioadenosine. The spermidine site is built by H64 and D88. S-methyl-5'-thioadenosine-binding positions include E108 and 140–141 (DG). D158 (proton acceptor) is an active-site residue. Spermidine is bound at residue 158-161 (DCTD). Residue P165 coordinates S-methyl-5'-thioadenosine.

This sequence belongs to the spermidine/spermine synthase family. Homodimer or homotetramer.

The protein localises to the cytoplasm. It carries out the reaction S-adenosyl 3-(methylsulfanyl)propylamine + putrescine = S-methyl-5'-thioadenosine + spermidine + H(+). It participates in amine and polyamine biosynthesis; spermidine biosynthesis; spermidine from putrescine: step 1/1. Its function is as follows. Catalyzes the irreversible transfer of a propylamine group from the amino donor S-adenosylmethioninamine (decarboxy-AdoMet) to putrescine (1,4-diaminobutane) to yield spermidine. The polypeptide is Polyamine aminopropyltransferase (Escherichia coli O17:K52:H18 (strain UMN026 / ExPEC)).